Reading from the N-terminus, the 571-residue chain is CDT1-like protein a, chloroplastic (571 aa).

Residues 1-79 (MSTPGSSRSI…GSRRRSEDPV (79 aa)) constitute a chloroplast transit peptide. Disordered regions lie at residues 1 to 110 (MSTP…EKEK) and 288 to 315 (TTSS…TPAK). A compositionally biased stretch (polar residues) spans 22-38 (SPSSKSQTGNPNPSSVA). Over residues 81 to 96 (SSAKSRLFFDSSSSSP) the composition is skewed to low complexity. Residues 288-302 (TTSSLAKPTSSQINI) show a composition bias toward polar residues. Residues 303-315 (APTPTKPTSTPAK) show a composition bias toward low complexity.

This sequence belongs to the Cdt1 family. As to quaternary structure, binds to ARC6. In terms of processing, phosphorylated by cyclin D- and cyclin A-containing CDKA-1, and thus targeted to proteasome-mediated proteolysis. Expressed in proliferating (e.g. shoot and root apical meristems, organ primordia) and endoreplicating cells (e.g. guard cells and stomatal lineage, developing trichomes).

Its subcellular location is the plastid. It localises to the chloroplast. In terms of biological role, member of the pre-replication complex. Component of the plastid division machinery. Promotes polyloidization and regulates endoreduplication. Involved in the coordination of cell and plastid division. The polypeptide is CDT1-like protein a, chloroplastic (CDT1A) (Arabidopsis thaliana (Mouse-ear cress)).